Consider the following 299-residue polypeptide: MARAIWKGAISFGLVHIPVALVSATTSNSVDFDWLDKRSMDPVGYKRINKVTGKEVTKENIVKGVLHEKDRYVVLSEEEIRSAHPKSTQTIDIFAFVDSQQIPLQNIDTPYFLTPDKRGEKVYALLRETLVDTQKVALANVVLHTREHLAAVMPLESALVMVILRWPADVRELDALELTEAVTDARLTKSERDMARRLVKDMSADWQPDQYHDTFQEKIMQLVQTKAGEGKIEDVETDPGEEERKSADVIDLTDLLRRSLAGKSSASKTRKPAAKDKVADKQSPKPKRPAVRKKTGKAS.

One can recognise a Ku domain in the interval 10–188 (ISFGLVHIPV…TEAVTDARLT (179 aa)). 2 disordered regions span residues 227 to 249 (AGEG…SADV) and 261 to 299 (AGKS…GKAS). The segment covering 273–283 (AAKDKVADKQS) has biased composition (basic and acidic residues). The segment covering 284 to 299 (PKPKRPAVRKKTGKAS) has biased composition (basic residues).

Belongs to the prokaryotic Ku family. In terms of assembly, homodimer. Interacts with LigD.

With LigD forms a non-homologous end joining (NHEJ) DNA repair enzyme, which repairs dsDNA breaks with reduced fidelity. Binds linear dsDNA with 5'- and 3'- overhangs but not closed circular dsDNA nor ssDNA. Recruits and stimulates the ligase activity of LigD. This Pseudomonas syringae pv. tomato (strain ATCC BAA-871 / DC3000) protein is Non-homologous end joining protein Ku.